Consider the following 202-residue polypeptide: FMN-dependent NADH:quinone oxidoreductase (202 aa).

FMN-binding positions include S10 and 95-98 (MYNF).

This sequence belongs to the azoreductase type 1 family. Homodimer. It depends on FMN as a cofactor.

It catalyses the reaction 2 a quinone + NADH + H(+) = 2 a 1,4-benzosemiquinone + NAD(+). The catalysed reaction is N,N-dimethyl-1,4-phenylenediamine + anthranilate + 2 NAD(+) = 2-(4-dimethylaminophenyl)diazenylbenzoate + 2 NADH + 2 H(+). Functionally, quinone reductase that provides resistance to thiol-specific stress caused by electrophilic quinones. Its function is as follows. Also exhibits azoreductase activity. Catalyzes the reductive cleavage of the azo bond in aromatic azo compounds to the corresponding amines. The polypeptide is FMN-dependent NADH:quinone oxidoreductase (Alkalilimnicola ehrlichii (strain ATCC BAA-1101 / DSM 17681 / MLHE-1)).